A 660-amino-acid chain; its full sequence is tRNA 5-methylaminomethyl-2-thiouridine biosynthesis bifunctional protein MnmC (660 aa).

Residues 1-242 (MTDRIVPATL…KRAMLVGEFA (242 aa)) form a tRNA (mnm(5)s(2)U34)-methyltransferase region. The FAD-dependent cmnm(5)s(2)U34 oxidoreductase stretch occupies residues 266 to 660 (IGAGLAGCAV…VRALRHGRVA (395 aa)).

It in the N-terminal section; belongs to the methyltransferase superfamily. tRNA (mnm(5)s(2)U34)-methyltransferase family. The protein in the C-terminal section; belongs to the DAO family. It depends on FAD as a cofactor.

The protein resides in the cytoplasm. The catalysed reaction is 5-aminomethyl-2-thiouridine(34) in tRNA + S-adenosyl-L-methionine = 5-methylaminomethyl-2-thiouridine(34) in tRNA + S-adenosyl-L-homocysteine + H(+). In terms of biological role, catalyzes the last two steps in the biosynthesis of 5-methylaminomethyl-2-thiouridine (mnm(5)s(2)U) at the wobble position (U34) in tRNA. Catalyzes the FAD-dependent demodification of cmnm(5)s(2)U34 to nm(5)s(2)U34, followed by the transfer of a methyl group from S-adenosyl-L-methionine to nm(5)s(2)U34, to form mnm(5)s(2)U34. This chain is tRNA 5-methylaminomethyl-2-thiouridine biosynthesis bifunctional protein MnmC, found in Burkholderia pseudomallei (strain 1106a).